Consider the following 177-residue polypeptide: Large ribosomal subunit protein uL6 (177 aa).

This sequence belongs to the universal ribosomal protein uL6 family. In terms of assembly, part of the 50S ribosomal subunit.

Its function is as follows. This protein binds to the 23S rRNA, and is important in its secondary structure. It is located near the subunit interface in the base of the L7/L12 stalk, and near the tRNA binding site of the peptidyltransferase center. The polypeptide is Large ribosomal subunit protein uL6 (Photobacterium profundum (strain SS9)).